Here is a 186-residue protein sequence, read N- to C-terminus: Large ribosomal subunit protein bL12c (186 aa).

Over residues 1–11 (MASTLSTITLR) the composition is skewed to polar residues. Positions 1 to 24 (MASTLSTITLRSPSPSTATSTHAS) are disordered. A chloroplast-targeting transit peptide spans 1 to 53 (MASTLSTITLRSPSPSTATSTHASIPFPKKTLEFPIRTPKLQNRRATFLRPLA). The span at 12 to 24 (SPSPSTATSTHAS) shows a compositional bias: low complexity.

The protein belongs to the bacterial ribosomal protein bL12 family.

Its subcellular location is the plastid. It localises to the chloroplast. The chain is Large ribosomal subunit protein bL12c from Nicotiana sylvestris (Wood tobacco).